The chain runs to 371 residues: Queuine tRNA-ribosyltransferase (371 aa).

Aspartate 90 serves as the catalytic Proton acceptor. Substrate-binding positions include 90-94 (DSGGF), aspartate 144, glutamine 188, and glycine 215. The tract at residues 246–252 (GVGTPED) is RNA binding. Catalysis depends on aspartate 265, which acts as the Nucleophile. An RNA binding; important for wobble base 34 recognition region spans residues 270–274 (TRNAR). 4 residues coordinate Zn(2+): cysteine 303, cysteine 305, cysteine 308, and histidine 334.

This sequence belongs to the queuine tRNA-ribosyltransferase family. As to quaternary structure, homodimer. Within each dimer, one monomer is responsible for RNA recognition and catalysis, while the other monomer binds to the replacement base PreQ1. Zn(2+) is required as a cofactor.

The enzyme catalyses 7-aminomethyl-7-carbaguanine + guanosine(34) in tRNA = 7-aminomethyl-7-carbaguanosine(34) in tRNA + guanine. It participates in tRNA modification; tRNA-queuosine biosynthesis. Its function is as follows. Catalyzes the base-exchange of a guanine (G) residue with the queuine precursor 7-aminomethyl-7-deazaguanine (PreQ1) at position 34 (anticodon wobble position) in tRNAs with GU(N) anticodons (tRNA-Asp, -Asn, -His and -Tyr). Catalysis occurs through a double-displacement mechanism. The nucleophile active site attacks the C1' of nucleotide 34 to detach the guanine base from the RNA, forming a covalent enzyme-RNA intermediate. The proton acceptor active site deprotonates the incoming PreQ1, allowing a nucleophilic attack on the C1' of the ribose to form the product. After dissociation, two additional enzymatic reactions on the tRNA convert PreQ1 to queuine (Q), resulting in the hypermodified nucleoside queuosine (7-(((4,5-cis-dihydroxy-2-cyclopenten-1-yl)amino)methyl)-7-deazaguanosine). This is Queuine tRNA-ribosyltransferase from Neisseria meningitidis serogroup C / serotype 2a (strain ATCC 700532 / DSM 15464 / FAM18).